We begin with the raw amino-acid sequence, 144 residues long: SsrA-binding protein (144 aa).

This sequence belongs to the SmpB family.

Its subcellular location is the cytoplasm. Its function is as follows. Required for rescue of stalled ribosomes mediated by trans-translation. Binds to transfer-messenger RNA (tmRNA), required for stable association of tmRNA with ribosomes. tmRNA and SmpB together mimic tRNA shape, replacing the anticodon stem-loop with SmpB. tmRNA is encoded by the ssrA gene; the 2 termini fold to resemble tRNA(Ala) and it encodes a 'tag peptide', a short internal open reading frame. During trans-translation Ala-aminoacylated tmRNA acts like a tRNA, entering the A-site of stalled ribosomes, displacing the stalled mRNA. The ribosome then switches to translate the ORF on the tmRNA; the nascent peptide is terminated with the 'tag peptide' encoded by the tmRNA and targeted for degradation. The ribosome is freed to recommence translation, which seems to be the essential function of trans-translation. The sequence is that of SsrA-binding protein from Thermus thermophilus (strain ATCC BAA-163 / DSM 7039 / HB27).